A 123-amino-acid polypeptide reads, in one-letter code: Fluoride-specific ion channel FluC (123 aa).

The next 4 membrane-spanning stretches (helical) occupy residues 5-25, 33-53, 62-82, and 94-114; these read VWVA…YKFV, LATF…IGAF, LKLA…TFAA, and ITAF…VALG. Residues Gly72 and Ser75 each coordinate Na(+).

The protein belongs to the fluoride channel Fluc/FEX (TC 1.A.43) family.

It is found in the cell inner membrane. The enzyme catalyses fluoride(in) = fluoride(out). Its activity is regulated as follows. Na(+) is not transported, but it plays an essential structural role and its presence is essential for fluoride channel function. Its function is as follows. Fluoride-specific ion channel. Important for reducing fluoride concentration in the cell, thus reducing its toxicity. The protein is Fluoride-specific ion channel FluC of Ignicoccus hospitalis (strain KIN4/I / DSM 18386 / JCM 14125).